The primary structure comprises 464 residues: Protein ABHD18 (464 aa).

Positions 1 to 24 (MGVSKLDILYRRLLLTKLFIRGWG) are cleaved as a signal peptide. Asparagine 341 is a glycosylation site (N-linked (GlcNAc...) asparagine).

The protein belongs to the AB hydrolase superfamily.

Its subcellular location is the secreted. This is Protein ABHD18 from Mus musculus (Mouse).